The sequence spans 388 residues: MNKILVINAGSSSIKFQLYDANEKVLAKGLCERIFIDGAFKYEFEDGSKDEGNSAFPTHKEALTHLLESLKKHKVINDLSEIVGVGHRVVQGAYWTDSTLITPQVLEKIYELAKLAPLHNKPEADVIDVVQKLIPKAKNVAVFDTSFHTSMPEVAYEYAIPREWKEKHLVRRYGYHGTSYRYVTKRFEQLLNKKAVNLVICHLGNGASIAAIKDSKSINTSMGFTPLEGLVMGTRSGDIDPSVVQYIAKQTNKTLDQVIDDLNKKSGLLGLSSYADMRDVTSNLPKTQLTLDVYTQRVADYILKYANQINASIDGLVFTAGVGENASLIIQEVVNKVHLLKVSLDPKAFEQKYSDYRKLSDDKSQLNVYQVRTNEEIMIMRDVVRLSK.

Residue Asn-8 coordinates Mg(2+). Lys-15 serves as a coordination point for ATP. Arg-88 provides a ligand contact to substrate. The Proton donor/acceptor role is filled by Asp-144. Residues 202–206 (HLGNG), 276–278 (DMR), and 321–325 (GVGEN) each bind ATP. Glu-375 lines the Mg(2+) pocket.

This sequence belongs to the acetokinase family. As to quaternary structure, homodimer. Mg(2+) is required as a cofactor. The cofactor is Mn(2+).

The protein localises to the cytoplasm. It catalyses the reaction acetate + ATP = acetyl phosphate + ADP. The protein operates within metabolic intermediate biosynthesis; acetyl-CoA biosynthesis; acetyl-CoA from acetate: step 1/2. Functionally, catalyzes the formation of acetyl phosphate from acetate and ATP. Can also catalyze the reverse reaction. The sequence is that of Acetate kinase from Mycoplasmoides gallisepticum (strain R(low / passage 15 / clone 2)) (Mycoplasma gallisepticum).